The chain runs to 319 residues: Transaldolase (319 aa).

Lys126 acts as the Schiff-base intermediate with substrate in catalysis.

The protein belongs to the transaldolase family. Type 1 subfamily. In terms of assembly, homodimer.

It localises to the cytoplasm. The enzyme catalyses D-sedoheptulose 7-phosphate + D-glyceraldehyde 3-phosphate = D-erythrose 4-phosphate + beta-D-fructose 6-phosphate. The protein operates within carbohydrate degradation; pentose phosphate pathway; D-glyceraldehyde 3-phosphate and beta-D-fructose 6-phosphate from D-ribose 5-phosphate and D-xylulose 5-phosphate (non-oxidative stage): step 2/3. Its function is as follows. Transaldolase is important for the balance of metabolites in the pentose-phosphate pathway. The polypeptide is Transaldolase (Bordetella petrii (strain ATCC BAA-461 / DSM 12804 / CCUG 43448)).